The following is a 438-amino-acid chain: Xylose isomerase (438 aa).

Residues H100 and D103 contribute to the active site. The Mg(2+) site is built by E231, E267, H270, D295, D306, D308, and D338.

The protein belongs to the xylose isomerase family. As to quaternary structure, homotetramer. It depends on Mg(2+) as a cofactor.

Its subcellular location is the cytoplasm. The catalysed reaction is alpha-D-xylose = alpha-D-xylulofuranose. This chain is Xylose isomerase, found in Pseudomonas syringae pv. syringae (strain B728a).